A 471-amino-acid chain; its full sequence is Putative multidrug resistance protein MdtD (471 aa).

Topologically, residues 1–11 (MTDLPDSTRWQ) are periplasmic. The helical transmembrane segment at 12 to 32 (LWIVAFGFFMQSLDTTIVNTA) threads the bilayer. The Cytoplasmic portion of the chain corresponds to 33–48 (LPSMAQSLGESPLHMH). The chain crosses the membrane as a helical span at residues 49-69 (MVIVSYVLTVAVMLPASGWLA). Over 70–76 (DKVGVRN) the chain is Periplasmic. A helical transmembrane segment spans residues 77-97 (IFFTAIVLFTLGSLFCALSGT). The Cytoplasmic portion of the chain corresponds to 98-101 (LNEL). A helical transmembrane segment spans residues 102–124 (LLARALQGVGGAMMVPVGRLTVM). Over 125–137 (KIVPREQYMAAMT) the chain is Periplasmic. Residues 138 to 158 (FVTLPGQVGPLLGPALGGLLV) traverse the membrane as a helical segment. The Cytoplasmic portion of the chain corresponds to 159–164 (EYASWH). Residues 165–185 (WIFLINIPVGIIGAIATLMLM) form a helical membrane-spanning segment. Residues 186–196 (PNYTMQTRRFD) lie on the Periplasmic side of the membrane. The helical transmembrane segment at 197-217 (LSGFLLLAVGMAVLTLALDGS) threads the bilayer. The Cytoplasmic portion of the chain corresponds to 218-224 (KGTGLSP). The helical transmembrane segment at 225–245 (LAITGLVAVGVVALVLYLLHA) threads the bilayer. Over 246-262 (RNNHRALFSLKLFRTRT) the chain is Periplasmic. A helical membrane pass occupies residues 263–283 (FSLGLAGSFAGRIGSGMLPFM). Residues 284-285 (TP) lie on the Cytoplasmic side of the membrane. A helical transmembrane segment spans residues 286-306 (VFLQIGLGFSPFHAGLMMIPM). Over 307-341 (VLGSMGMKRIVVQVVNRFGYRRVLVATTLGLSLVT) the chain is Periplasmic. Residues 342–362 (LLFMTTALLGWYYVLPFVLFL) traverse the membrane as a helical segment. The Cytoplasmic segment spans residues 363–395 (QGMVNSTRFSSMNTLTLKDLPDNLASSGNSLLS). A helical transmembrane segment spans residues 396–416 (MIMQLSMSIGVTIAGLLLGLF). Residues 417–430 (GSQHVSVDSGTTQT) lie on the Periplasmic side of the membrane. A helical membrane pass occupies residues 431 to 451 (VFMYTWLSMAFIIALPAFIFA). Residues 452–471 (RVPNDTHQNVAISRRKRSAQ) are Cytoplasmic-facing.

It belongs to the major facilitator superfamily. TCR/Tet family.

It localises to the cell inner membrane. The polypeptide is Putative multidrug resistance protein MdtD (Escherichia coli O127:H6 (strain E2348/69 / EPEC)).